The chain runs to 304 residues: Probable porphobilinogen deaminase (304 aa).

Cys240 carries the post-translational modification S-(dipyrrolylmethanemethyl)cysteine.

Belongs to the HMBS family. Dipyrromethane is required as a cofactor.

The enzyme catalyses 4 porphobilinogen + H2O = hydroxymethylbilane + 4 NH4(+). It functions in the pathway porphyrin-containing compound metabolism; protoporphyrin-IX biosynthesis; coproporphyrinogen-III from 5-aminolevulinate: step 2/4. Functionally, tetrapolymerization of the monopyrrole PBG into the hydroxymethylbilane pre-uroporphyrinogen in several discrete steps. This is Probable porphobilinogen deaminase from Ignicoccus hospitalis (strain KIN4/I / DSM 18386 / JCM 14125).